The primary structure comprises 382 residues: Gap junction alpha-1 protein (382 aa).

At 2-23 (GDWSALGKLLDKVQAYSTAGGK) the chain is on the cytoplasmic side. A Phosphoserine modification is found at serine 5. The chain crosses the membrane as a helical span at residues 24-44 (VWLSVLFIFRILLLGTAVESA). Residues 45-76 (WGDEQSAFRCNTQQPGCENVCYDKSFPISHVR) are Extracellular-facing. Intrachain disulfides connect cysteine 54–cysteine 192 and cysteine 187–cysteine 198. A helical transmembrane segment spans residues 77–97 (FWVLQIIFVSVPTLLYLAHVF). Over 98-155 (YVMRKEEKLNKKEEELKVAQTDGVNVEMHLKQIEIKKFKYGIEEHGKVKMRGGLLRTY) the chain is Cytoplasmic. Lysine 144 participates in a covalent cross-link: Glycyl lysine isopeptide (Lys-Gly) (interchain with G-Cter in SUMO). A helical transmembrane segment spans residues 156 to 176 (IISILFKSIFEVAFLLIQWYI). The Extracellular segment spans residues 177-207 (YGFSLSAVYTCKRDPCPHQVDCFLSRPTEKT). Residues 208–228 (IFIIFMLVVSLVSLALNIIEL) form a helical membrane-spanning segment. Over 229-382 (FYVFFKGVKD…SRPRPDDLEI (154 aa)) the chain is Cytoplasmic. Residue lysine 237 forms a Glycyl lysine isopeptide (Lys-Gly) (interchain with G-Cter in SUMO) linkage. Positions 244–382 (SDPYHTTSGA…SRPRPDDLEI (139 aa)) are interaction with NOV. Tyrosine 247 carries the post-translational modification Phosphotyrosine. Serine 255 and serine 262 each carry phosphoserine. The interval 264–382 (KYAYFNGCSS…SRPRPDDLEI (119 aa)) is interaction with UBQLN4. Cysteine 271 carries the S-nitrosocysteine modification. Position 275 is a phosphothreonine (threonine 275). 2 positions are modified to phosphoserine: serine 306 and serine 314. Residues 317 to 332 (QNRMGQAGSTISNSHA) show a composition bias toward polar residues. A disordered region spans residues 317 to 382 (QNRMGQAGST…SRPRPDDLEI (66 aa)). Serine 325 is subject to Phosphoserine; by CK1. A Phosphothreonine modification is found at threonine 326. Phosphoserine; by CK1 occurs at positions 328 and 330. Serine 344 and serine 365 each carry phosphoserine. The span at 362–374 (RPSSRASSRASSR) shows a compositional bias: low complexity. A Phosphoserine; by PKC/PRKCG and PKC/PRKCD modification is found at serine 368. Serine 369 and serine 373 each carry phosphoserine.

It belongs to the connexin family. Alpha-type (group II) subfamily. In terms of assembly, a connexon is composed of a hexamer of connexins. Interacts with SGSM3. Interacts with RIC1/CIP150. Interacts with CNST and CSNK1D. Interacts (via C-terminus) with TJP1. Interacts (via C-terminus) with SRC (via SH3 domain). Interacts (not ubiquitinated) with UBQLN4 (via UBA domain). Interacts with NOV. Interacts with TMEM65. Interacts with ANK3/ANKG and PKP2. In terms of processing, phosphorylation at Ser-325, Ser-328 and Ser-330 by CK1 modulates gap junction assembly. Phosphorylated at Ser-368 by PRKCG; phosphorylation induces disassembly of gap junction plaques and inhibition of gap junction activity. Phosphorylation at Ser-368 by PRKCD triggers its internalization into small vesicles leading to proteasome-mediated degradation. Post-translationally, sumoylated with SUMO1, SUMO2 and SUMO3, which may regulate the level of functional Cx43 gap junctions at the plasma membrane. May be desumoylated by SENP1 or SENP2. S-nitrosylation at Cys-271 is enriched at the muscle endothelial gap junction in arteries, it augments channel permeability and may regulate of smooth muscle cell to endothelial cell communication. In terms of processing, acetylated in the developing cortex; leading to delocalization from the cell membrane.

Its subcellular location is the cell membrane. The protein localises to the cell junction. It is found in the gap junction. The protein resides in the endoplasmic reticulum. In terms of biological role, gap junction protein that acts as a regulator of bladder capacity. A gap junction consists of a cluster of closely packed pairs of transmembrane channels, the connexons, through which materials of low MW diffuse from one cell to a neighboring cell. May play a critical role in the physiology of hearing by participating in the recycling of potassium to the cochlear endolymph. Negative regulator of bladder functional capacity: acts by enhancing intercellular electrical and chemical transmission, thus sensitizing bladder muscles to cholinergic neural stimuli and causing them to contract. May play a role in cell growth inhibition through the regulation of NOV expression and localization. Plays an essential role in gap junction communication in the ventricles. This Chlorocebus aethiops (Green monkey) protein is Gap junction alpha-1 protein (GJA1).